Here is a 197-residue protein sequence, read N- to C-terminus: Carnitine operon protein CaiE (197 aa).

Belongs to the transferase hexapeptide repeat family.

It functions in the pathway amine and polyamine metabolism; carnitine metabolism. Functionally, overproduction of CaiE stimulates the activity of CaiB and CaiD. In Citrobacter koseri (strain ATCC BAA-895 / CDC 4225-83 / SGSC4696), this protein is Carnitine operon protein CaiE.